The sequence spans 554 residues: Phenylalanine--tRNA ligase beta subunit (554 aa).

The B5 domain maps to 276-351 (LTPRYREISI…KNHGYEKFEG (76 aa)). Mg(2+) is bound by residues Asp-329, Asp-335, Glu-338, and Glu-339.

This sequence belongs to the phenylalanyl-tRNA synthetase beta subunit family. Type 2 subfamily. In terms of assembly, tetramer of two alpha and two beta subunits. The cofactor is Mg(2+).

It is found in the cytoplasm. It carries out the reaction tRNA(Phe) + L-phenylalanine + ATP = L-phenylalanyl-tRNA(Phe) + AMP + diphosphate + H(+). In Methanococcus vannielii (strain ATCC 35089 / DSM 1224 / JCM 13029 / OCM 148 / SB), this protein is Phenylalanine--tRNA ligase beta subunit.